Here is a 594-residue protein sequence, read N- to C-terminus: Spermidine/putrescine import ATP-binding protein PotA (594 aa).

An ABC transporter domain is found at 24–435; that stretch reads IEIKKINKTY…PANNWVANFI (412 aa). Residue 57–64 participates in ATP binding; that stretch reads GPSGCGKT. The tract at residues 125-304 is insert; the sequence is RKPIENVSAD…EWFDKKKLTR (180 aa).

This sequence belongs to the ABC transporter superfamily. Spermidine/putrescine importer (TC 3.A.1.11.1) family. As to quaternary structure, the complex is composed of two ATP-binding proteins (PotA), two transmembrane proteins (PotB and PotC) and a solute-binding protein (PotD).

It is found in the cell membrane. The catalysed reaction is ATP + H2O + polyamine-[polyamine-binding protein]Side 1 = ADP + phosphate + polyamineSide 2 + [polyamine-binding protein]Side 1.. Part of the ABC transporter complex PotABCD involved in spermidine/putrescine import. Responsible for energy coupling to the transport system. In Malacoplasma penetrans (strain HF-2) (Mycoplasma penetrans), this protein is Spermidine/putrescine import ATP-binding protein PotA.